The primary structure comprises 102 residues: NADH-quinone oxidoreductase subunit K 1 (102 aa).

3 consecutive transmembrane segments (helical) span residues 5 to 25 (LYEVLILASILFAMGLACVVA), 30 to 50 (VIMMLIGIEIMLNAVMLTFVG), and 62 to 82 (VFSLMIMALTSAEVSLALAMV).

Belongs to the complex I subunit 4L family. NDH-1 is composed of 14 different subunits. Subunits NuoA, H, J, K, L, M, N constitute the membrane sector of the complex.

It localises to the cell inner membrane. It carries out the reaction a quinone + NADH + 5 H(+)(in) = a quinol + NAD(+) + 4 H(+)(out). Functionally, NDH-1 shuttles electrons from NADH, via FMN and iron-sulfur (Fe-S) centers, to quinones in the respiratory chain. The immediate electron acceptor for the enzyme in this species is believed to be ubiquinone. Couples the redox reaction to proton translocation (for every two electrons transferred, four hydrogen ions are translocated across the cytoplasmic membrane), and thus conserves the redox energy in a proton gradient. The protein is NADH-quinone oxidoreductase subunit K 1 of Geobacter sp. (strain M21).